The primary structure comprises 409 residues: 3-dehydro-bile acid delta(4,6)-reductase (409 aa).

Residues serine 12, glutamate 33, valine 131, glutamate 378, asparagine 390, and leucine 391 each contribute to the FAD site.

It belongs to the BaiN/RdsA family. BaiN subfamily. FAD serves as cofactor.

It carries out the reaction 3-oxocholan-24-oyl-CoA + NAD(+) = 3-oxochol-4-en-24-oyl-CoA + NADH + H(+). The enzyme catalyses 3-oxochol-4-en-24-oyl-CoA + NAD(+) = 3-oxochol-4,6-dien-24-oyl-CoA + NADH + H(+). The catalysed reaction is 12alpha-hydroxy-3-oxocholan-24-oyl-CoA + NAD(+) = 12alpha-hydroxy-3-oxochol-4-en-24-oyl-CoA + NADH + H(+). It catalyses the reaction 12alpha-hydroxy-3-oxochol-4-en-24-oyl-CoA + NAD(+) = 12alpha-hydroxy-3-oxochola-4,6-dien-24-oyl-CoA + NADH + H(+). It participates in lipid metabolism; bile acid degradation. Its function is as follows. Involved in the secondary bile acid metabolism. Catalyzes two subsequent reductions of the double bonds within the bile acid A/B rings of 3-oxochol-4,6-dien-24-oyl-CoA and 12alpha-hydroxy-3-oxochol-4,6-dien-24-oyl-CoA to yield 3-oxocholan-24-oyl-CoA and 12alpha-hydroxy-3-oxocholan-24-oyl-CoA, respectively. The sequence is that of 3-dehydro-bile acid delta(4,6)-reductase from Clostridium scindens (strain ATCC 35704 / DSM 5676 / VPI 13733 / 19).